Consider the following 656-residue polypeptide: Pyoverdine export ATP-binding/permease protein PvdT (656 aa).

An ABC transporter domain is found at 6-245; it reads IDLRGIRKSY…SANPAALQAV (240 aa). 43 to 50 provides a ligand contact to ATP; it reads GASGSGKS. Transmembrane regions (helical) follow at residues 284-304, 538-558, 589-609, and 619-639; these read ALTL…LAVG, IAAI…LMTV, LSVV…AALL, and LSAV…FGFM.

Belongs to the ABC transporter superfamily. Macrolide exporter (TC 3.A.1.122) family. Part of the tripartite efflux system PvdRT-OpmQ, which is composed of an inner membrane component with both ATPase and permease domains, PvdT, a periplasmic membrane fusion protein, PvdR, and an outer membrane component, OpmQ.

The protein localises to the cell inner membrane. Part of the tripartite efflux system PvdRT-OpmQ required for the secretion into the extracellular milieu of the siderophore pyoverdine (PVD), which is involved in iron acquisition. This subunit binds PVD and drives its secretion by hydrolyzing ATP. The system is responsible for export of newly synthesized PVD after the final steps of biosynthesis have taken place in the periplasm. It is also responsible for recycling of PVD after internalization of ferri-PVD into the periplasm by the outer-membrane receptor FpvA and release of iron from PVD, thus making PVD available for new cycles of iron uptake. The chain is Pyoverdine export ATP-binding/permease protein PvdT from Pseudomonas syringae pv. tomato (strain ATCC BAA-871 / DC3000).